A 411-amino-acid polypeptide reads, in one-letter code: MDVNGPKRWEPHRSLDLNPRSTPVYKSPLQEPCGVFGNKGTTKMSGVVIDMGTGICKMGFAGQTRPTYIVRNIVGCQPKRRTTMEQPKMEMFIGEAAHARPELTLMHPVRNGIVVDWEAAEFIWRHILENDLRLDTQDHPLLFTDPPFNPASNREKLVEVAFESLHSPAIYVASQSVLSVYANGRVNGLVVDTGHGVSYTVPVFQGYNLPSGIQRMDLAGHYLTKFLAEKILRSSFAVKKEDMDTMENIKQQYCYVALDFQKEQGRPDEKFRRCLKLPDGQMITVGKELFQCPELLFHPPDTSGPSSLGLPSMVEHSLSTVPQELRADMEQNVLLCGGSSLFTGFEGRFKTELLRRLGPEAHVVVVAQANRNLSVWIGGSILASLCAFQTRWVLREQYEEHGPDIVLRKCS.

The segment covering 1–15 (MDVNGPKRWEPHRSL) has biased composition (basic and acidic residues). Residues 1-23 (MDVNGPKRWEPHRSLDLNPRSTP) are disordered.

It belongs to the actin family. In terms of assembly, interacts with ACTL7A.

It localises to the cytoplasmic vesicle. It is found in the secretory vesicle. The protein localises to the acrosome. The protein resides in the cytoplasm. Its subcellular location is the cytoskeleton. It localises to the perinuclear theca. Testis-specic protein that plays an important role in fusion of proacrosomal vesicles and perinuclear theca formation. This is Actin-like protein 9 (Actl9) from Rattus norvegicus (Rat).